A 343-amino-acid polypeptide reads, in one-letter code: Ribosomal RNA small subunit methyltransferase C (343 aa).

It belongs to the methyltransferase superfamily. RsmC family. In terms of assembly, monomer.

Its subcellular location is the cytoplasm. The catalysed reaction is guanosine(1207) in 16S rRNA + S-adenosyl-L-methionine = N(2)-methylguanosine(1207) in 16S rRNA + S-adenosyl-L-homocysteine + H(+). In terms of biological role, specifically methylates the guanine in position 1207 of 16S rRNA in the 30S particle. The chain is Ribosomal RNA small subunit methyltransferase C from Shewanella sediminis (strain HAW-EB3).